The chain runs to 459 residues: Argininosuccinate lyase (459 aa).

The protein belongs to the lyase 1 family. Argininosuccinate lyase subfamily.

The protein resides in the cytoplasm. The enzyme catalyses 2-(N(omega)-L-arginino)succinate = fumarate + L-arginine. It functions in the pathway amino-acid biosynthesis; L-arginine biosynthesis; L-arginine from L-ornithine and carbamoyl phosphate: step 3/3. This Sulfurihydrogenibium sp. (strain YO3AOP1) protein is Argininosuccinate lyase.